The following is a 327-amino-acid chain: G-protein coupled receptor 55 (327 aa).

The Extracellular portion of the chain corresponds to 1-20 (MSQPERDNCSFDSVDKLTRT). The N-linked (GlcNAc...) asparagine glycan is linked to asparagine 8. A helical membrane pass occupies residues 21–41 (LQLAVHIPTFLLGLVLNLLAI). The Cytoplasmic segment spans residues 42-57 (RGFSAFLKKRKLDYIA). The chain crosses the membrane as a helical span at residues 58–78 (TSIYMINLAVFDLLLVLSLPF). Residues 79–93 (KMVLPQVESPLPSFC) lie on the Extracellular side of the membrane. The chain crosses the membrane as a helical span at residues 94-114 (TLVECLYFISMYGSVFTICFI). The Cytoplasmic portion of the chain corresponds to 115–136 (SLDRFLAIQYPILASHLRSPRK). Residues 137–157 (TFGICCIIWMLVWIGSIPIYT) form a helical membrane-spanning segment. Residues 158-179 (FHREVERYKCFHNMSDVTWSAS) lie on the Extracellular side of the membrane. N-linked (GlcNAc...) asparagine glycosylation occurs at asparagine 170. Residues 180 to 200 (VFFPLEIFGFLLPMGIMGFCS) form a helical membrane-spanning segment. Over 201-239 (YRSIHILLRRPDSTEDWVQQRDTKGWVQKRACIWTIATN) the chain is Cytoplasmic. The chain crosses the membrane as a helical span at residues 240-260 (LVIFVVSFLPVHLGFFLQYLV). Topologically, residues 261 to 279 (RNRFILDCRMKQGISLFLQ) are extracellular. Residues 280–300 (LSLCFSNINCCLDVFCYYFVI) form a helical membrane-spanning segment. Over 301–327 (KEFRMRIKAHRPSTIKLVNQDTMVSRG) the chain is Cytoplasmic.

Belongs to the G-protein coupled receptor 1 family. As to expression, highly expressed in splenic plasma cells.

It is found in the cell membrane. G-protein coupled receptor that binds to several ligands including 2-arachidonoyl lysophosphatidylinositol or lysophosphatidylglucoside with high affinity, leading to rapid and transient activation of numerous intracellular signaling pathways. Induces the Ca(2+) release from intracellular stores via ERK, the heterotrimeric G protein GNA13 and RHOA leading to morphological changes including cell rounding and stress fiber formation. In macrophages, acts downstream of lysophosphatidylglucoside to inhibit the translocation of the phospholipid-transporting ABCA1 to plasma membrane and subsequent cholesterol efflux leading to lipid accumulation and foam cell formation. May be involved in hyperalgesia associated with inflammatory and neuropathic pain. This Mus musculus (Mouse) protein is G-protein coupled receptor 55 (Gpr55).